The primary structure comprises 437 residues: 3-phosphoshikimate 1-carboxyvinyltransferase (437 aa).

Residues K26, S27, and R31 each contribute to the 3-phosphoshikimate site. K26 contributes to the phosphoenolpyruvate binding site. Phosphoenolpyruvate contacts are provided by G99 and R127. 3-phosphoshikimate-binding residues include S172, Q174, D320, and K347. Residue Q174 participates in phosphoenolpyruvate binding. D320 acts as the Proton acceptor in catalysis. Phosphoenolpyruvate contacts are provided by R351 and R392.

The protein belongs to the EPSP synthase family. Monomer.

The protein localises to the cytoplasm. The enzyme catalyses 3-phosphoshikimate + phosphoenolpyruvate = 5-O-(1-carboxyvinyl)-3-phosphoshikimate + phosphate. Its pathway is metabolic intermediate biosynthesis; chorismate biosynthesis; chorismate from D-erythrose 4-phosphate and phosphoenolpyruvate: step 6/7. Catalyzes the transfer of the enolpyruvyl moiety of phosphoenolpyruvate (PEP) to the 5-hydroxyl of shikimate-3-phosphate (S3P) to produce enolpyruvyl shikimate-3-phosphate and inorganic phosphate. The polypeptide is 3-phosphoshikimate 1-carboxyvinyltransferase (Methylococcus capsulatus (strain ATCC 33009 / NCIMB 11132 / Bath)).